Consider the following 321-residue polypeptide: Cytochrome c biogenesis protein CcsA (321 aa).

A run of 8 helical transmembrane segments spans residues 9–29 (ILTH…LMTL), 44–64 (GLIA…IYSG), 71–91 (LYES…VPYF), 97–117 (LLST…TSGL), 143–163 (MILS…LLVI), 227–247 (VISL…VWAN), 261–275 (TWAF…IYLH), and 288–308 (AIVA…VNLL).

This sequence belongs to the CcmF/CycK/Ccl1/NrfE/CcsA family. In terms of assembly, may interact with Ccs1.

It is found in the plastid. It localises to the chloroplast thylakoid membrane. Its function is as follows. Required during biogenesis of c-type cytochromes (cytochrome c6 and cytochrome f) at the step of heme attachment. This is Cytochrome c biogenesis protein CcsA from Nandina domestica (Heavenly bamboo).